A 383-amino-acid chain; its full sequence is Podocin (383 aa).

A compositionally biased stretch (basic and acidic residues) spans 1–41 (MERRARSSSRESRGRGGRTPHKENKRAKAERSGGGRGRQEA). A disordered region spans residues 1–76 (MERRARSSSR…VDEVRGSGEE (76 aa)). The Cytoplasmic segment spans residues 1-102 (MERRARSSSR…TKSSGLGACE (102 aa)). The S-palmitoyl cysteine moiety is linked to residue Cys-101. The stretch at 103–123 (WLLVLISLLFIIMTFPFSIWF) is an intramembrane region. Over 124-383 (CVKVVQEYER…NPKKKDSPML (260 aa)) the chain is Cytoplasmic. Gln-287 is a glycosylation site (N-linked (GlcNAc...) asparagine). The segment at 355-383 (NRTQGSLPFPSPSKPVEPLNPKKKDSPML) is disordered. The segment covering 374–383 (NPKKKDSPML) has biased composition (basic and acidic residues).

This sequence belongs to the band 7/mec-2 family. As to quaternary structure, interacts with nephrin/NPHS1 and KIRREL1. Interacts directly with CD2AP. Interacts with DDN. In terms of processing, glycosylated. In terms of tissue distribution, almost exclusively expressed in the podocytes of fetal and mature kidney glomeruli.

Its subcellular location is the cell membrane. The protein resides in the endoplasmic reticulum. Plays a role in the regulation of glomerular permeability, acting probably as a linker between the plasma membrane and the cytoskeleton. This is Podocin (NPHS2) from Homo sapiens (Human).